The sequence spans 96 residues: UPF0235 protein VIBHAR_03581 (96 aa).

This sequence belongs to the UPF0235 family.

This Vibrio campbellii (strain ATCC BAA-1116) protein is UPF0235 protein VIBHAR_03581.